The primary structure comprises 169 residues: Spore protein SP21 (169 aa).

Disordered regions lie at residues 1-21 (MADL…REWD) and 150-169 (QPKR…HIKA). Positions 47 to 159 (QGPPAFVPAF…QPKRIQVASS (113 aa)) constitute a sHSP domain.

It belongs to the small heat shock protein (HSP20) family.

In terms of biological role, may stabilize cellular components during stress and spore formation. In Stigmatella aurantiaca (strain DW4/3-1), this protein is Spore protein SP21 (hspA).